A 117-amino-acid polypeptide reads, in one-letter code: uncharacterized protein (117 aa).

The protein resides in the mitochondrion. This is an uncharacterized protein from Arabidopsis thaliana (Mouse-ear cress).